The sequence spans 181 residues: CASP-like protein 1F2 (181 aa).

Residues 1-18 (MADIETKSSQNQPLKTQN) lie on the Cytoplasmic side of the membrane. The chain crosses the membrane as a helical span at residues 19-39 (IFIGAQIFLRIVVIAASFAST). The Extracellular segment spans residues 40-70 (WLMLTNKQTIDIGGFVLDANYSYSPEFKFLS). Residue Asn-59 is glycosylated (N-linked (GlcNAc...) asparagine). A helical membrane pass occupies residues 71–91 (YANIVVGAFSFVSLLFLVLVG). Over 92–100 (RRSSNPTYY) the chain is Cytoplasmic. A helical membrane pass occupies residues 101 to 121 (FILFLHDLALMSLVLGGCAAA). Topologically, residues 122–150 (TVIGSLGKYGNSHTGWMQICDHFGKFCKR) are extracellular. Residues 151–171 (ATTSVAFSYFSLVCLLILTIT) traverse the membrane as a helical segment. Topologically, residues 172–181 (SASKSRQIQV) are cytoplasmic.

Belongs to the Casparian strip membrane proteins (CASP) family. As to quaternary structure, homodimer and heterodimers.

The protein localises to the cell membrane. This is CASP-like protein 1F2 from Populus trichocarpa (Western balsam poplar).